Consider the following 867-residue polypeptide: uncharacterized protein (867 aa).

Positions 76-108 (CDFCRQKKIRCDMDQSPRPGNACINCRKHHLDC) form a DNA-binding region, zn(2)-C6 fungal-type. Disordered regions lie at residues 110 to 167 (FTRT…ITPV) and 217 to 257 (PQLA…NSNL). 2 stretches are compositionally biased toward polar residues: residues 137–167 (SAKS…ITPV) and 248–257 (SISSYTNSNL).

It is found in the nucleus. This is an uncharacterized protein from Schizosaccharomyces pombe (strain 972 / ATCC 24843) (Fission yeast).